Consider the following 290-residue polypeptide: Undecaprenyl-diphosphatase (290 aa).

The next 8 membrane-spanning stretches (helical) occupy residues 1–21 (MALWIAALLGVIQGIFMFLPV), 49–69 (MILFALVVHVGTLVSIAVVFW), 101–121 (LFWLGMFSVLCTGVLGLTLKA), 126–146 (VFASPLMIAGTLTLTGILLWW), 160–180 (INLKVAGVIGLAQGFALMPGL), 203–223 (YSFFLAIPTICAATLLQAIEV), 232–252 (VGFSALAVGFVVAAIVGIISL), and 266–286 (VFSFYVWALALGIATGLIDLA).

This sequence belongs to the UppP family.

It localises to the cell inner membrane. It carries out the reaction di-trans,octa-cis-undecaprenyl diphosphate + H2O = di-trans,octa-cis-undecaprenyl phosphate + phosphate + H(+). Functionally, catalyzes the dephosphorylation of undecaprenyl diphosphate (UPP). Confers resistance to bacitracin. The chain is Undecaprenyl-diphosphatase from Alkalilimnicola ehrlichii (strain ATCC BAA-1101 / DSM 17681 / MLHE-1).